The chain runs to 190 residues: MTEEQKKYEDAENLESKSENPEEASAEKSENGVEDLQAENEKLKKDLLYSKAEAQNTRRRLEKEKSEAIAYSVTGFARDMLSVADNMERALAAIPDDIKQDEKIKNLVTGIEMTGKELLNILQRHGIKRVESVGQKLDPNLHQAMIEIESEKPEGTVVQEMQAGYTIHDRLLRPAMVGVAKAQSGETKSA.

Residues 1 to 31 (MTEEQKKYEDAENLESKSENPEEASAEKSEN) are compositionally biased toward basic and acidic residues. A disordered region spans residues 1 to 39 (MTEEQKKYEDAENLESKSENPEEASAEKSENGVEDLQAE).

It belongs to the GrpE family. Homodimer.

It is found in the cytoplasm. Functionally, participates actively in the response to hyperosmotic and heat shock by preventing the aggregation of stress-denatured proteins, in association with DnaK and GrpE. It is the nucleotide exchange factor for DnaK and may function as a thermosensor. Unfolded proteins bind initially to DnaJ; upon interaction with the DnaJ-bound protein, DnaK hydrolyzes its bound ATP, resulting in the formation of a stable complex. GrpE releases ADP from DnaK; ATP binding to DnaK triggers the release of the substrate protein, thus completing the reaction cycle. Several rounds of ATP-dependent interactions between DnaJ, DnaK and GrpE are required for fully efficient folding. In Zymomonas mobilis subsp. mobilis (strain ATCC 31821 / ZM4 / CP4), this protein is Protein GrpE.